We begin with the raw amino-acid sequence, 453 residues long: Aspartic proteinase PCS1 (453 aa).

The N-terminal stretch at 1-18 (MFSRFHALFLLLVLSVRT) is a signal peptide. Positions 19 to 57 (YKCVSSSSSSSSSFSFSSFSSSSSSQTLVLPLKTRITPT) are cleaved as a propeptide — activation peptide. N-linked (GlcNAc...) asparagine glycosylation is found at asparagine 70 and asparagine 85. Positions 73–438 (LTVTLTVGTP…DLQRSRIGLA (366 aa)) constitute a Peptidase A1 domain. Residue aspartate 91 is part of the active site. N-linked (GlcNAc...) asparagine glycosylation is found at asparagine 102, asparagine 175, asparagine 178, and asparagine 243. Residue aspartate 304 is part of the active site. N-linked (GlcNAc...) asparagine glycosylation is found at asparagine 326 and asparagine 395.

The protein belongs to the peptidase A1 family. In terms of tissue distribution, expressed specifically in developing gametophytes and developing seeds.

The protein localises to the endoplasmic reticulum. Its function is as follows. Embryo-specific aspartic protease that limits programmed cell death during reproductive development. Possesses peptidase activity toward casein in vitro. This is Aspartic proteinase PCS1 (PCS1) from Arabidopsis thaliana (Mouse-ear cress).